Consider the following 444-residue polypeptide: MTAPPPVLTRIDLRGAELTAAELRAALPRGGADVEAVLPTVRPIVAAVAERGAEAALDFGASFDGVRPHAIRVPDAALDAALAGLDCDVCEALQVMVERTRAVHSGQRRTDVTTTLGPGATVTERWVPVERVGLYVPGGNAVYPSSVVMNVVPAQAAGVDSLVVASPPQAQWDGMPHPTILAAARLLGVDEVWAVGGAQAVALLAYGGTDTDGAALTPVDMITGPGNIYVTAAKRLCRSRVGIDAEAGPTEIAILADHTADPVHVAADLISQAEHDELAASVLVTPSEDLADATDAELAGQLQTTVHRERVTAALTGRQSAIVLVDDVDAAVLVVNAYAAEHLEIQTADAPQVASRIRSAGAIFVGPWSPVSLGDYCAGSNHVLPTAGCARHSSGLSVQTFLRGIHVVEYTEAALKDVSGHVITLATAEDLPAHGEAVRRRFER.

NAD(+)-binding residues include tyrosine 135, glutamine 199, and asparagine 227. Positions 250, 272, and 275 each coordinate substrate. Zn(2+)-binding residues include glutamine 272 and histidine 275. Active-site proton acceptor residues include glutamate 341 and histidine 342. Positions 342, 375, 429, and 434 each coordinate substrate. Position 375 (aspartate 375) interacts with Zn(2+). Histidine 434 provides a ligand contact to Zn(2+).

The protein belongs to the histidinol dehydrogenase family. Zn(2+) serves as cofactor.

The enzyme catalyses L-histidinol + 2 NAD(+) + H2O = L-histidine + 2 NADH + 3 H(+). It participates in amino-acid biosynthesis; L-histidine biosynthesis; L-histidine from 5-phospho-alpha-D-ribose 1-diphosphate: step 9/9. Functionally, catalyzes the sequential NAD-dependent oxidations of L-histidinol to L-histidinaldehyde and then to L-histidine. The polypeptide is Histidinol dehydrogenase (hisD) (Mycobacterium bovis (strain ATCC BAA-935 / AF2122/97)).